Consider the following 210-residue polypeptide: Imidazole glycerol phosphate synthase subunit HisH (210 aa).

Residues 3 to 210 form the Glutamine amidotransferase type-1 domain; sequence TIAIIDYGMG…ILKNFALSKA (208 aa). The Nucleophile role is filled by cysteine 81. Active-site residues include histidine 190 and glutamate 192.

Heterodimer of HisH and HisF.

The protein resides in the cytoplasm. It catalyses the reaction 5-[(5-phospho-1-deoxy-D-ribulos-1-ylimino)methylamino]-1-(5-phospho-beta-D-ribosyl)imidazole-4-carboxamide + L-glutamine = D-erythro-1-(imidazol-4-yl)glycerol 3-phosphate + 5-amino-1-(5-phospho-beta-D-ribosyl)imidazole-4-carboxamide + L-glutamate + H(+). The catalysed reaction is L-glutamine + H2O = L-glutamate + NH4(+). It participates in amino-acid biosynthesis; L-histidine biosynthesis; L-histidine from 5-phospho-alpha-D-ribose 1-diphosphate: step 5/9. Functionally, IGPS catalyzes the conversion of PRFAR and glutamine to IGP, AICAR and glutamate. The HisH subunit catalyzes the hydrolysis of glutamine to glutamate and ammonia as part of the synthesis of IGP and AICAR. The resulting ammonia molecule is channeled to the active site of HisF. The sequence is that of Imidazole glycerol phosphate synthase subunit HisH from Geobacter metallireducens (strain ATCC 53774 / DSM 7210 / GS-15).